The sequence spans 659 residues: Exoribonuclease 2 (659 aa).

The RNB domain maps to 189–531 (RENLTALHFV…NHRLIKAVLA (343 aa)). In terms of domain architecture, S1 motif spans 576-658 (NAEFEAEVQD…ATRSIVGEIL (83 aa)).

This sequence belongs to the RNR ribonuclease family. RNase II subfamily.

Its subcellular location is the cytoplasm. The enzyme catalyses Exonucleolytic cleavage in the 3'- to 5'-direction to yield nucleoside 5'-phosphates.. Involved in mRNA degradation. Hydrolyzes single-stranded polyribonucleotides processively in the 3' to 5' direction. The chain is Exoribonuclease 2 from Haemophilus influenzae (strain PittGG).